Reading from the N-terminus, the 563-residue chain is Calnexin homolog (563 aa).

The first 23 residues, 1 to 23 (MRFNAAITGALVSSATLMGQAHA), serve as a signal peptide directing secretion. Residues 24 to 493 (EETEKKADAT…PINAVKQVPE (470 aa)) lie on the Lumenal side of the membrane. Asp-98 provides a ligand contact to Ca(2+). A disulfide bond links Cys-141 and Cys-175. Residues Tyr-145, Lys-147, Tyr-166, and Asp-173 each coordinate an alpha-D-glucoside. Asn-236 carries an N-linked (GlcNAc...) asparagine glycan. The segment at 241 to 323 (EDFAPPVNPE…EKPEDWDDEE (83 aa)) is disordered. Over residues 249 to 279 (PEKEIDDPKDKKPADWVDEAKIPDPEAKKPD) the composition is skewed to basic and acidic residues. A p domain (Extended arm) region spans residues 253–386 (IDDPKDKKPA…RKIPNPAYFE (134 aa)). Acidic residues predominate over residues 280–305 (DWDEDAPYEIVDEEATMPEDWLEDEP). An intrachain disulfide couples Cys-337 to Cys-343. Position 402 (Glu-402) interacts with an alpha-D-glucoside. Asp-413 is a Ca(2+) binding site. A helical transmembrane segment spans residues 494–514 (VAGGLGALLLTMILVIVGAVG). Residues 515–563 (ASSPAPAAAAKKGKEAASAAKEKASEAVSSAADTAKGAATKRNTRSSAQ) are Cytoplasmic-facing. The segment at 521 to 563 (AAAAKKGKEAASAAKEKASEAVSSAADTAKGAATKRNTRSSAQ) is disordered. Residues 526 to 539 (KGKEAASAAKEKAS) are compositionally biased toward basic and acidic residues.

This sequence belongs to the calreticulin family.

The protein localises to the endoplasmic reticulum membrane. In terms of biological role, interacts with newly synthesized monoglucosylated glycoproteins in the endoplasmic reticulum. It may act in assisting protein assembly and/or in the retention within the ER of unassembled protein subunits. It seems to play a major role in the quality control apparatus of the ER by the retention of incorrectly folded proteins. This chain is Calnexin homolog, found in Aspergillus fumigatus (strain ATCC MYA-4609 / CBS 101355 / FGSC A1100 / Af293) (Neosartorya fumigata).